The sequence spans 215 residues: MKLILLILTAYLLGSIPTGLWIGQYFYNINLREHGSGNTGTTNTFRILGLKAGAATLLIDIFKGTLATLLPVLVGASNVSPIAIGFFAVLGHTFPIFAGFKGGKAVATSAGVLLGFAPLYLLFLAAVFVLTLYLFSMISLASLTASVVAVISVLTFPAAHFLLPGYDWLLTITIVVLAAIIILRHQDNMKRIKQQSENLIPWGLNLSKQQPASHH.

6 helical membrane passes run 3-23 (LILL…LWIG), 42-61 (TNTF…LIDI), 68-90 (TLLP…FAVL), 110-130 (AGVL…VFVL), 134-154 (LFSM…ISVL), and 162-182 (LLPG…AIII).

The protein belongs to the PlsY family. Probably interacts with PlsX.

It is found in the cell membrane. It catalyses the reaction an acyl phosphate + sn-glycerol 3-phosphate = a 1-acyl-sn-glycero-3-phosphate + phosphate. It functions in the pathway lipid metabolism; phospholipid metabolism. Functionally, catalyzes the transfer of an acyl group from acyl-phosphate (acyl-PO(4)) to glycerol-3-phosphate (G3P) to form lysophosphatidic acid (LPA). This enzyme utilizes acyl-phosphate as fatty acyl donor, but not acyl-CoA or acyl-ACP. In Streptococcus equi subsp. zooepidemicus (strain MGCS10565), this protein is Glycerol-3-phosphate acyltransferase.